The chain runs to 396 residues: Large ribosomal subunit protein uL4A (396 aa).

Residues 352 to 373 show a composition bias toward basic and acidic residues; it reads KAKEKKPDDGKPKAKKPLDAKT. Positions 352–374 are disordered; that stretch reads KAKEKKPDDGKPKAKKPLDAKTK.

This sequence belongs to the universal ribosomal protein uL4 family. Component of the large ribosomal subunit.

It localises to the cytoplasm. In terms of biological role, component of the large ribosomal subunit. The ribosome is a large ribonucleoprotein complex responsible for the synthesis of proteins in the cell. The protein is Large ribosomal subunit protein uL4A (rpl4-a) of Xenopus laevis (African clawed frog).